We begin with the raw amino-acid sequence, 638 residues long: 1-deoxy-D-xylulose-5-phosphate synthase (638 aa).

Residues histidine 71 and 112 to 114 (SHA) each bind thiamine diphosphate. Aspartate 144 is a Mg(2+) binding site. Residues 145–146 (GA), asparagine 173, tyrosine 284, and glutamate 365 each bind thiamine diphosphate. Asparagine 173 provides a ligand contact to Mg(2+).

The protein belongs to the transketolase family. DXPS subfamily. In terms of assembly, homodimer. Mg(2+) is required as a cofactor. Requires thiamine diphosphate as cofactor.

It catalyses the reaction D-glyceraldehyde 3-phosphate + pyruvate + H(+) = 1-deoxy-D-xylulose 5-phosphate + CO2. Its pathway is metabolic intermediate biosynthesis; 1-deoxy-D-xylulose 5-phosphate biosynthesis; 1-deoxy-D-xylulose 5-phosphate from D-glyceraldehyde 3-phosphate and pyruvate: step 1/1. Catalyzes the acyloin condensation reaction between C atoms 2 and 3 of pyruvate and glyceraldehyde 3-phosphate to yield 1-deoxy-D-xylulose-5-phosphate (DXP). This Mycobacterium sp. (strain KMS) protein is 1-deoxy-D-xylulose-5-phosphate synthase.